A 258-amino-acid chain; its full sequence is Adenosylcobinamide-GDP ribazoletransferase (258 aa).

The next 6 helical transmembrane spans lie at 41-61 (FFPLVGWLVGAAGALAYWLAS), 65-85 (PAPGVAVAASMAATLLLTGAF), 115-135 (IGAFGAIAVCMALLLKWQLLM), 136-156 (AMAAQHAAAAMAAMVAAHAAS), 197-217 (LPLLGFGMACAAIAVAVLLAA), and 236-256 (CLGLAQQVFELLVLWVLLAWT).

It belongs to the CobS family. Requires Mg(2+) as cofactor.

The protein resides in the cell inner membrane. It catalyses the reaction alpha-ribazole + adenosylcob(III)inamide-GDP = adenosylcob(III)alamin + GMP + H(+). It carries out the reaction alpha-ribazole 5'-phosphate + adenosylcob(III)inamide-GDP = adenosylcob(III)alamin 5'-phosphate + GMP + H(+). Its pathway is cofactor biosynthesis; adenosylcobalamin biosynthesis; adenosylcobalamin from cob(II)yrinate a,c-diamide: step 7/7. Functionally, joins adenosylcobinamide-GDP and alpha-ribazole to generate adenosylcobalamin (Ado-cobalamin). Also synthesizes adenosylcobalamin 5'-phosphate from adenosylcobinamide-GDP and alpha-ribazole 5'-phosphate. The protein is Adenosylcobinamide-GDP ribazoletransferase of Ralstonia nicotianae (strain ATCC BAA-1114 / GMI1000) (Ralstonia solanacearum).